The chain runs to 72 residues: uncharacterized protein (72 aa).

This is an uncharacterized protein from Acidianus hospitalis (AFV-1).